A 37-amino-acid polypeptide reads, in one-letter code: MKVRSSVKPICKDCKVIRRQRVVRVICKTPKHKQRQG.

It belongs to the bacterial ribosomal protein bL36 family.

The polypeptide is Large ribosomal subunit protein bL36 (rpmJ) (Mycoplasmoides gallisepticum (strain R(low / passage 15 / clone 2)) (Mycoplasma gallisepticum)).